Here is a 338-residue protein sequence, read N- to C-terminus: uncharacterized protein (338 aa).

The next 3 membrane-spanning stretches (helical) occupy residues 11–31, 249–269, and 318–338; these read ILSL…TFAI, IAVF…IIPA, and VPTP…GLGL.

It is found in the cell membrane. This is an uncharacterized protein from Methanocaldococcus jannaschii (strain ATCC 43067 / DSM 2661 / JAL-1 / JCM 10045 / NBRC 100440) (Methanococcus jannaschii).